The sequence spans 752 residues: Sialidase 85-1.1 (752 aa).

An N-terminal signal peptide occupies residues 1–23 (MSRRVFASAVLLLIVVTMCCGGA). 2 BNR repeats span residues 274-285 (IYSKDNGSTWSL) and 319-330 (YVSRDMGTTWTE). The tract at residues 693 to 725 (APEPQVKIAPKPAAPAAPAGNEETARETGDGGA) is disordered. The span at 701-711 (APKPAAPAAPA) shows a compositional bias: low complexity.

This sequence belongs to the glycosyl hydrolase 33 family.

The enzyme catalyses Hydrolysis of alpha-(2-&gt;3)-, alpha-(2-&gt;6)-, alpha-(2-&gt;8)- glycosidic linkages of terminal sialic acid residues in oligosaccharides, glycoproteins, glycolipids, colominic acid and synthetic substrates.. Functionally, developmentally regulated neuraminidase implicated in parasite invasion of cells. May contribute to the pathology during T.cruzi infection by cleaving sialic acid from cells of the immune system. This is Sialidase 85-1.1 (SA85-1.1) from Trypanosoma cruzi.